Reading from the N-terminus, the 304-residue chain is ADP-ribosyl cyclase/cyclic ADP-ribose hydrolase 1 (304 aa).

Topologically, residues 1–21 are cytoplasmic; the sequence is MANYEFSQVSGDRPGCRLSRK. A helical; Signal-anchor for type II membrane protein transmembrane segment spans residues 22–44; sequence AQIGLGVGLLVLIALVVGIVVIL. Over 45 to 304 the chain is Extracellular; sequence LRPRSLLVWT…PEHPSCRLNT (260 aa). Intrachain disulfides connect Cys70–Cys86, Cys103–Cys184, and Cys164–Cys177. An N-linked (GlcNAc...) asparagine glycan is attached at Asn104. Residue Cys123 is part of the active site. A glycan (N-linked (GlcNAc...) asparagine) is linked at Asn124. Cys205 is an active-site residue. Residues Asn213 and Asn223 are each glycosylated (N-linked (GlcNAc...) asparagine). 2 disulfide bridges follow: Cys258-Cys279 and Cys291-Cys300.

The protein belongs to the ADP-ribosyl cyclase family. In terms of assembly, homodimer.

The protein localises to the membrane. It carries out the reaction NAD(+) = cyclic ADP-beta-D-ribose + nicotinamide + H(+). It catalyses the reaction nicotinate + NADP(+) = nicotinate-adenine dinucleotide phosphate + nicotinamide. The catalysed reaction is NAD(+) + H2O = ADP-D-ribose + nicotinamide + H(+). Functionally, synthesizes the second messengers cyclic ADP-ribose (cADPR) and nicotinate-adenine dinucleotide phosphate (NAADP), the former a second messenger for glucose-induced insulin secretion, the latter a Ca(2+) mobilizer. Also has cADPR hydrolase activity. This chain is ADP-ribosyl cyclase/cyclic ADP-ribose hydrolase 1 (Cd38), found in Mus musculus (Mouse).